The sequence spans 223 residues: Urease subunit alpha (223 aa).

The urease gamma stretch occupies residues 1–101 (MHFTQQQLQR…LVTIHEPIAN (101 aa)). Residues 102-223 (DDKIKAGEIF…LSKAKEKGFL (122 aa)) are urease beta.

In the N-terminal section; belongs to the urease gamma subunit family. The protein in the C-terminal section; belongs to the urease beta subunit family. Heterohexamer of 3 UreA (alpha) and 3 UreB (beta) subunits.

The protein resides in the cytoplasm. It carries out the reaction urea + 2 H2O + H(+) = hydrogencarbonate + 2 NH4(+). Its pathway is nitrogen metabolism; urea degradation; CO(2) and NH(3) from urea (urease route): step 1/1. The chain is Urease subunit alpha from Campylobacter lari.